Reading from the N-terminus, the 2896-residue chain is Hemocyanin G-type, units Oda to Odg (2896 aa).

The interval 1–419 (NLIRKDVDAL…ADMVVVDKTG (419 aa)) is functional unit Oda. Residue histidine 41 coordinates Cu cation. Cysteine 47 and cysteine 57 are oxidised to a cystine. Residues 58–60 (CLH) constitute a cross-link (2'-(S-cysteinyl)-histidine (Cys-His)). Cu cation contacts are provided by histidine 60, histidine 69, histidine 178, histidine 182, and histidine 209. Intrachain disulfides connect cysteine 168-cysteine 234 and cysteine 321-cysteine 333. Asparagine 386 carries an N-linked (GlcNAc...) asparagine glycan. Residues 420 to 834 (LNVRKDLQSL…KESGVVFDEL (415 aa)) are functional unit Odb. A Cu cation-binding site is contributed by histidine 460. Cysteine 466 and cysteine 477 form a disulfide bridge. Residues 478 to 480 (CVH) constitute a cross-link (2'-(S-cysteinyl)-histidine (Cys-His)). Cu cation contacts are provided by histidine 480, histidine 489, histidine 601, histidine 605, and histidine 632. The cysteines at positions 591 and 657 are disulfide-linked. A glycan (N-linked (GlcNAc...) asparagine) is linked at asparagine 804. The functional unit Odc stretch occupies residues 835–1254 (YRSRRDVSSL…GIWVEPVTSA (420 aa)). Residue histidine 875 coordinates Cu cation. A disulfide bond links cysteine 881 and cysteine 892. Positions 893–895 (CHH) form a cross-link, 2'-(S-cysteinyl)-histidine (Cys-His). Cu cation is bound by residues histidine 895, histidine 904, histidine 1013, histidine 1017, histidine 1044, and histidine 1292. Cysteine 1003 and cysteine 1070 form a disulfide bridge. The tract at residues 1255-1667 (NRIRKNLNAL…ADIKSEEGNE (413 aa)) is functional unit Odd. Cysteine 1298 and cysteine 1309 are joined by a disulfide. The segment at residues 1310-1312 (CIH) is a cross-link (2'-(S-cysteinyl)-histidine (Cys-His)). Cu cation-binding residues include histidine 1312, histidine 1321, histidine 1425, histidine 1429, and histidine 1456. Cysteine 1415 and cysteine 1482 are joined by a disulfide. N-linked (GlcNAc...) asparagine glycosylation occurs at asparagine 1496. Cysteine 1571 and cysteine 1581 are oxidised to a cystine. N-linked (GlcNAc...) asparagine glycosylation is present at asparagine 1634. Residues 1668 to 2085 (YLVRKNVERL…NEDADIDTPL (418 aa)) are functional unit Ode. Histidine 1708 provides a ligand contact to Cu cation. Cysteine 1714 and cysteine 1725 are joined by a disulfide. The segment at residues 1726–1728 (CLH) is a cross-link (2'-(S-cysteinyl)-histidine (Cys-His)). 5 residues coordinate Cu cation: histidine 1728, histidine 1737, histidine 1849, histidine 1853, and histidine 1880. 2 disulfide bridges follow: cysteine 1839-cysteine 1906 and cysteine 1997-cysteine 2003. An N-linked (GlcNAc...) asparagine glycan is attached at asparagine 2055. The segment at 2086–2502 (NHIRRNVESL…REVHKKTVGD (417 aa)) is functional unit Odf. Histidine 2126 serves as a coordination point for Cu cation. Cysteine 2131 and cysteine 2141 are disulfide-bonded. Positions 2142 to 2144 (CLH) form a cross-link, 2'-(S-cysteinyl)-histidine (Cys-His). Positions 2144 and 2153 each coordinate Cu cation. An N-linked (GlcNAc...) asparagine glycan is attached at asparagine 2201. 2 disulfides stabilise this stretch: cysteine 2252/cysteine 2319 and cysteine 2406/cysteine 2411. Cu cation is bound by residues histidine 2262, histidine 2266, and histidine 2293. The functional unit Odg stretch occupies residues 2503-2896 (AIIRKNVNSL…VFLAPAKTTH (394 aa)). Histidine 2543 serves as a coordination point for Cu cation. A disulfide bridge links cysteine 2549 with cysteine 2559. The N-linked (GlcNAc...) asparagine glycan is linked to asparagine 2553. A cross-link (2'-(S-cysteinyl)-histidine (Cys-His)) is located at residues 2560–2562 (CQH). Positions 2562, 2571, 2671, 2675, and 2702 each coordinate Cu cation. 2 cysteine pairs are disulfide-bonded: cysteine 2661/cysteine 2728 and cysteine 2815/cysteine 2821.

Belongs to the tyrosinase family. Hemocyanin subfamily. As to quaternary structure, decamers of large identical subunits (350 kDa), each containing 7 globular oxygen-binding functional units: ODA, ODB, ODC, ODD, ODE, ODF, and ODG. Decamer formation requires the presence of magnesium ions. Requires Cu(2+) as cofactor.

Hemocyanins are copper-containing oxygen carriers occurring freely dissolved in the hemolymph of many mollusks and arthropods. This chain is Hemocyanin G-type, units Oda to Odg (ODHCY), found in Enteroctopus dofleini (North Pacific giant octopus).